Here is a 417-residue protein sequence, read N- to C-terminus: UPF0597 protein Cphy_1256 (417 aa).

Belongs to the UPF0597 family.

This chain is UPF0597 protein Cphy_1256, found in Lachnoclostridium phytofermentans (strain ATCC 700394 / DSM 18823 / ISDg) (Clostridium phytofermentans).